The following is a 348-amino-acid chain: Doublesex- and mab-3-related transcription factor dmd-10 (348 aa).

2 DNA-binding regions (DM) span residues 43–91 (CQRC…YNQF) and 119–166 (CQKC…KIRR). A disordered region spans residues 316–348 (SMSMSSSPSKDDESGDEDSDGLNSNSIIDVITV).

It belongs to the DMRT family. Dimorphically expressed in the dimorphically connected interneuron AVG; expression is observed in the AVG in males, but not in hermaphrodites.

Its subcellular location is the nucleus. Functionally, transcription factor. Plays a role in neuronal signaling in polymodal sensory neuron ASH, downstream of sensory receptor activation. Required for maintenance of AVG synapses. The sequence is that of Doublesex- and mab-3-related transcription factor dmd-10 from Caenorhabditis elegans.